Reading from the N-terminus, the 204-residue chain is Thymidylate kinase (204 aa).

Residue 9–16 coordinates ATP; sequence GIEASGKT.

The protein belongs to the thymidylate kinase family.

It catalyses the reaction dTMP + ATP = dTDP + ADP. Phosphorylation of dTMP to form dTDP in both de novo and salvage pathways of dTTP synthesis. In Sulfurihydrogenibium sp. (strain YO3AOP1), this protein is Thymidylate kinase.